Consider the following 158-residue polypeptide: MQCPSCQNTDSRVLESRAAEGGRSVRRRRECLNCEFRFTTYERVEMVPITVIKRNGHREIFNRSKLLHGLSRACEKTGLTPSKLEEIVDNLELSLQQSSSREITSSEIGELVLSHLKGLSEVAYVRFASVYRHFRSVSDFVSTLEGMNADKAELAALV.

A zinc finger spans residues cysteine 3 to cysteine 34. An ATP-cone domain is found at isoleucine 49–aspartate 139.

The protein belongs to the NrdR family. Zn(2+) serves as cofactor.

In terms of biological role, negatively regulates transcription of bacterial ribonucleotide reductase nrd genes and operons by binding to NrdR-boxes. The polypeptide is Transcriptional repressor NrdR (Synechococcus sp. (strain CC9311)).